We begin with the raw amino-acid sequence, 363 residues long: Histidinol-phosphate aminotransferase (363 aa).

Lys227 is modified (N6-(pyridoxal phosphate)lysine).

This sequence belongs to the class-II pyridoxal-phosphate-dependent aminotransferase family. Histidinol-phosphate aminotransferase subfamily. As to quaternary structure, homodimer. Pyridoxal 5'-phosphate is required as a cofactor.

It carries out the reaction L-histidinol phosphate + 2-oxoglutarate = 3-(imidazol-4-yl)-2-oxopropyl phosphate + L-glutamate. The protein operates within amino-acid biosynthesis; L-histidine biosynthesis; L-histidine from 5-phospho-alpha-D-ribose 1-diphosphate: step 7/9. This is Histidinol-phosphate aminotransferase from Akkermansia muciniphila (strain ATCC BAA-835 / DSM 22959 / JCM 33894 / BCRC 81048 / CCUG 64013 / CIP 107961 / Muc).